The following is a 429-amino-acid chain: Putative GMP synthase [glutamine-hydrolyzing] (429 aa).

In terms of domain architecture, Glutamine amidotransferase type-1 spans 10-118 (TIFILDFGSQ…GYTPIHLYPC (109 aa)). The active-site Nucleophile is Cys-87. A GMPS ATP-PPase domain is found at 119 to 304 (ELFKHIVDCE…LGLSSYLLDR (186 aa)). Catalysis depends on residues His-176 and Glu-178.

As to quaternary structure, homodimer.

It carries out the reaction XMP + L-glutamine + ATP + H2O = GMP + L-glutamate + AMP + diphosphate + 2 H(+). It participates in purine metabolism; GMP biosynthesis; GMP from XMP (L-Gln route): step 1/1. Catalyzes the synthesis of GMP from XMP. This is Putative GMP synthase [glutamine-hydrolyzing] (guaA) from Chlamydia pneumoniae (Chlamydophila pneumoniae).